A 347-amino-acid polypeptide reads, in one-letter code: Selenide, water dikinase 2 (347 aa).

Residue U18 is part of the active site. U18 is a non-standard amino acid (selenocysteine). Residues K21 and 48-50 (TSD) contribute to the ATP site. D51 contacts Mg(2+). Residues D68, D91, and 138–140 (GHT) contribute to the ATP site. Residue D91 participates in Mg(2+) binding. D226 contributes to the Mg(2+) binding site.

This sequence belongs to the selenophosphate synthase 1 family. Class I subfamily. As to quaternary structure, homodimer. The cofactor is Mg(2+).

It catalyses the reaction hydrogenselenide + ATP + H2O = selenophosphate + AMP + phosphate + 2 H(+). In terms of biological role, synthesizes selenophosphate from selenide and ATP. The polypeptide is Selenide, water dikinase 2 (Peptoclostridium acidaminophilum (Eubacterium acidaminophilum)).